The following is a 153-amino-acid chain: SsrA-binding protein (153 aa).

Residues 131–153 (EYDKRDSIRERDDRREMDRAFKR) are disordered.

The protein belongs to the SmpB family.

It is found in the cytoplasm. In terms of biological role, required for rescue of stalled ribosomes mediated by trans-translation. Binds to transfer-messenger RNA (tmRNA), required for stable association of tmRNA with ribosomes. tmRNA and SmpB together mimic tRNA shape, replacing the anticodon stem-loop with SmpB. tmRNA is encoded by the ssrA gene; the 2 termini fold to resemble tRNA(Ala) and it encodes a 'tag peptide', a short internal open reading frame. During trans-translation Ala-aminoacylated tmRNA acts like a tRNA, entering the A-site of stalled ribosomes, displacing the stalled mRNA. The ribosome then switches to translate the ORF on the tmRNA; the nascent peptide is terminated with the 'tag peptide' encoded by the tmRNA and targeted for degradation. The ribosome is freed to recommence translation, which seems to be the essential function of trans-translation. This chain is SsrA-binding protein, found in Parabacteroides distasonis (strain ATCC 8503 / DSM 20701 / CIP 104284 / JCM 5825 / NCTC 11152).